Here is a 181-residue protein sequence, read N- to C-terminus: 3-hexulose-6-phosphate isomerase (181 aa).

The SIS domain maps to 27-168 (ILSLVDAAGR…IAKLVDQKGL (142 aa)). Residues serine 45 and 84-89 (SGSGST) contribute to the substrate site. The Proton acceptor role is filled by glutamate 148.

It belongs to the SIS family. PHI subfamily. As to quaternary structure, homodimer.

The enzyme catalyses D-arabino-hex-3-ulose 6-phosphate = beta-D-fructose 6-phosphate. It functions in the pathway one-carbon metabolism; formaldehyde assimilation via RuMP pathway; D-fructose 6-phosphate from D-ribulose 5-phosphate and formaldehyde: step 2/2. Catalyzes the isomerization between 3-hexulose 6-phosphate and fructose 6-phosphate. The protein is 3-hexulose-6-phosphate isomerase (rmpB) of Methylomonas aminofaciens.